We begin with the raw amino-acid sequence, 90 residues long: UPF0223 protein LMHCC_1569 (90 aa).

Belongs to the UPF0223 family.

The sequence is that of UPF0223 protein LMHCC_1569 from Listeria monocytogenes serotype 4a (strain HCC23).